The sequence spans 371 residues: DNA replication and repair protein RecF (371 aa).

30-37 (GKNGQGKT) contributes to the ATP binding site.

The protein belongs to the RecF family.

The protein localises to the cytoplasm. The RecF protein is involved in DNA metabolism; it is required for DNA replication and normal SOS inducibility. RecF binds preferentially to single-stranded, linear DNA. It also seems to bind ATP. This Clostridioides difficile (strain 630) (Peptoclostridium difficile) protein is DNA replication and repair protein RecF.